The primary structure comprises 193 residues: Ribosomal RNA large subunit methyltransferase E (193 aa).

Residues Gly51, Trp53, Asp69, Asp85, and Asp108 each contribute to the S-adenosyl-L-methionine site. Lys148 serves as the catalytic Proton acceptor.

The protein belongs to the class I-like SAM-binding methyltransferase superfamily. RNA methyltransferase RlmE family.

The protein localises to the cytoplasm. The catalysed reaction is uridine(2552) in 23S rRNA + S-adenosyl-L-methionine = 2'-O-methyluridine(2552) in 23S rRNA + S-adenosyl-L-homocysteine + H(+). In terms of biological role, specifically methylates the uridine in position 2552 of 23S rRNA at the 2'-O position of the ribose in the fully assembled 50S ribosomal subunit. In Methanoregula boonei (strain DSM 21154 / JCM 14090 / 6A8), this protein is Ribosomal RNA large subunit methyltransferase E.